Here is a 164-residue protein sequence, read N- to C-terminus: Transcription elongation factor GreA (164 aa).

Residues 50-76 (YHAAREEQGQQEARIRQLQELLNNAKV) adopt a coiled-coil conformation.

This sequence belongs to the GreA/GreB family.

Its function is as follows. Necessary for efficient RNA polymerase transcription elongation past template-encoded arresting sites. The arresting sites in DNA have the property of trapping a certain fraction of elongating RNA polymerases that pass through, resulting in locked ternary complexes. Cleavage of the nascent transcript by cleavage factors such as GreA or GreB allows the resumption of elongation from the new 3'terminus. GreA releases sequences of 2 to 3 nucleotides. The chain is Transcription elongation factor GreA from Mycolicibacterium smegmatis (strain ATCC 700084 / mc(2)155) (Mycobacterium smegmatis).